Here is a 428-residue protein sequence, read N- to C-terminus: Synaptotagmin-1 (428 aa).

The Vesicular segment spans residues 1 to 67 (MDSLLARVKR…KDKLINEIEN (67 aa)). The tract at residues 16 to 50 (ALNPAQEGVTGGPDAAGLPDVSTSSPGGGGAGDKL) is disordered. A helical membrane pass occupies residues 68–92 (LPIWAIVLIIAGSLLFLVCCVYCVC). Over 93-428 (RRSCRKRKKK…HTLQEVPEKN (336 aa)) the chain is Cytoplasmic. Phosphoserine; by PRKC2 is present on Ser-123. Residues 147–395 (STKSEVKLGK…PIGRCVLGCN (249 aa)) form a phospholipid binding region. 2 C2 domains span residues 153 to 272 (KLGK…EDWK) and 286 to 419 (KLGD…AQWH). The Ca(2+) site is built by Asp-184, Asp-190, Asp-242, Phe-243, Asp-244, Ser-247, Lys-248, Asp-250, Asp-317, Asp-323, Asp-377, and Asp-379.

The protein belongs to the synaptotagmin family. In terms of assembly, binds SNAP25. Isoform 3 binds SNAP25 with higher affinity. Ca(2+) serves as cofactor.

The protein localises to the cytoplasmic vesicle. Its subcellular location is the secretory vesicle. It localises to the synaptic vesicle membrane. The protein resides in the synapse. Its function is as follows. Acts as inhibitor of neurotransmitter release. Overexpression leads to a decrease in the amplitude of the excitatory postsynaptic potential in dissected cholinergic and glutaminergic neurons while depletion with antisense oligonucleotides leads to an increase. Overexpression of isoform 1 blocks the reversal of synaptic depression by serotonin in sensory neurons. This chain is Synaptotagmin-1 (SYT1), found in Aplysia californica (California sea hare).